A 445-amino-acid polypeptide reads, in one-letter code: Phosphoglucosamine mutase (445 aa).

Ser-104 functions as the Phosphoserine intermediate in the catalytic mechanism. Positions 104, 243, 245, and 247 each coordinate Mg(2+). Ser-104 bears the Phosphoserine mark.

Belongs to the phosphohexose mutase family. Mg(2+) is required as a cofactor. Post-translationally, activated by phosphorylation.

It catalyses the reaction alpha-D-glucosamine 1-phosphate = D-glucosamine 6-phosphate. Functionally, catalyzes the conversion of glucosamine-6-phosphate to glucosamine-1-phosphate. In Neisseria subflava, this protein is Phosphoglucosamine mutase.